Consider the following 663-residue polypeptide: Dual specificity protein phosphatase 8 (663 aa).

Residues Gly-23–Glu-138 enclose the Rhodanese domain. The Tyrosine-protein phosphatase domain maps to Gly-160–Leu-302. Cys-246 serves as the catalytic Phosphocysteine intermediate. 2 disordered regions span residues Leu-313 to Pro-367 and Tyr-404 to Arg-624. Low complexity-rich tracts occupy residues Ser-334 to Ser-353, Leu-427 to Val-448, and Ser-546 to Ser-557. The span at Ser-558 to Ser-577 shows a compositional bias: gly residues. Residues Ser-578–Ser-600 are compositionally biased toward low complexity.

The protein belongs to the protein-tyrosine phosphatase family. Non-receptor class dual specificity subfamily. Monomer. As to expression, expressed predominantly in brain and lung.

It localises to the cytoplasm. It is found in the nucleus. It carries out the reaction O-phospho-L-tyrosyl-[protein] + H2O = L-tyrosyl-[protein] + phosphate. The catalysed reaction is O-phospho-L-seryl-[protein] + H2O = L-seryl-[protein] + phosphate. It catalyses the reaction O-phospho-L-threonyl-[protein] + H2O = L-threonyl-[protein] + phosphate. In terms of biological role, has phosphatase activity with synthetic phosphatase substrates and negatively regulates mitogen-activated protein kinase activity, presumably by catalysing their dephosphorylation. Expected to display protein phosphatase activity toward phosphotyrosine, phosphoserine and phosphothreonine residues. The chain is Dual specificity protein phosphatase 8 (Dusp8) from Mus musculus (Mouse).